A 116-amino-acid chain; its full sequence is Spexin (116 aa).

A signal peptide spans 1-26 (MKGPSVLAVTAVVLLLVLSALENSSG). A propeptide spanning residues 27–35 (APQRLSEKR) is cleaved from the precursor. The residue at position 49 (Q49) is a Glutamine amide. 2 consecutive propeptides follow at residues 50-116 (GRRF…LFNW) and 74-116 (PDLE…LFNW). A disordered region spans residues 52 to 77 (RFLSDQSRRKELADRPPPERRNPDLE). Over residues 53-75 (FLSDQSRRKELADRPPPERRNPD) the composition is skewed to basic and acidic residues.

It belongs to the spexin family.

The protein resides in the secreted. Its subcellular location is the extracellular space. It localises to the cytoplasmic vesicle. The protein localises to the secretory vesicle. Its function is as follows. Plays a role as a central modulator of cardiovascular and renal function and nociception. Also plays a role in energy metabolism and storage. Inhibits adrenocortical cell proliferation with minor stimulation on corticosteroid release. Acts as a ligand for galanin receptors GALR2 and GALR3. Intracerebroventricular administration of the peptide induces an increase in arterial blood pressure, a decrease in both heart rate and renal excretion and delayed natriuresis. Intraventricular administration of the peptide induces antinociceptive activity. Also induces contraction of muscarinic-like stomach smooth muscles. Intraperitoneal administration of the peptide induces a reduction in food consumption and body weight. Inhibits long chain fatty acid uptake into adipocytes. In terms of biological role, intracerebroventricular administration of the peptide induces a decrease in heart rate, but no change in arterial pressure, and an increase in urine flow rate. Intraventricular administration of the peptide induces antinociceptive activity. In Mus musculus (Mouse), this protein is Spexin (Spx).